Here is a 352-residue protein sequence, read N- to C-terminus: Ni-sirohydrochlorin a,c-diamide reductive cyclase complex, component CfbD (352 aa).

This sequence belongs to the NifD/NifK/NifE/NifN family. In terms of assembly, homodimer or monomer. The Ni-sirohydrochlorin a,c-diamide reductive cyclase complex is composed of a NifH homolog component CfbC and a NifD homolog component CfbD. [4Fe-4S] cluster is required as a cofactor.

It carries out the reaction Ni-sirohydrochlorin a,c-diamide + 3 AH2 + ATP + H2O = 15,17(3)-seco-F430-17(3)-acid + 3 A + ADP + phosphate. Its function is as follows. Involved in the biosynthesis of the unique nickel-containing tetrapyrrole coenzyme F430, the prosthetic group of methyl-coenzyme M reductase (MCR), which plays a key role in methanogenesis and anaerobic methane oxidation. Catalyzes both the six-electron reduction of the tetrahydroporphyrin ring system and the gamma-lactamization of the c-acetamide side chain of Ni-sirohydrochlorin a,c-diamide to yield 15,17(3)-seco-F430-17(3)-acid (seco-F430), the last intermediate in the biosynthesis of the coenzyme F430. The sequence is that of Ni-sirohydrochlorin a,c-diamide reductive cyclase complex, component CfbD from Methanocaldococcus jannaschii (strain ATCC 43067 / DSM 2661 / JAL-1 / JCM 10045 / NBRC 100440) (Methanococcus jannaschii).